A 451-amino-acid polypeptide reads, in one-letter code: Trigger factor (451 aa).

Residues 173-258 form the PPIase FKBP-type domain; sequence GDRVTLDFVG…LKKIEWAHLP (86 aa).

This sequence belongs to the FKBP-type PPIase family. Tig subfamily.

Its subcellular location is the cytoplasm. It carries out the reaction [protein]-peptidylproline (omega=180) = [protein]-peptidylproline (omega=0). Its function is as follows. Involved in protein export. Acts as a chaperone by maintaining the newly synthesized protein in an open conformation. Functions as a peptidyl-prolyl cis-trans isomerase. This chain is Trigger factor, found in Cupriavidus necator (strain ATCC 17699 / DSM 428 / KCTC 22496 / NCIMB 10442 / H16 / Stanier 337) (Ralstonia eutropha).